A 302-amino-acid chain; its full sequence is N-acetylmuramic acid 6-phosphate etherase (302 aa).

Residues 58–221 form the SIS domain; that stretch reads IGEAFLNGGR…STGAMVKTGK (164 aa). E86 (proton donor) is an active-site residue. The active site involves E117.

It belongs to the GCKR-like family. MurNAc-6-P etherase subfamily. In terms of assembly, homodimer.

The catalysed reaction is N-acetyl-D-muramate 6-phosphate + H2O = N-acetyl-D-glucosamine 6-phosphate + (R)-lactate. The protein operates within amino-sugar metabolism; N-acetylmuramate degradation. In terms of biological role, specifically catalyzes the cleavage of the D-lactyl ether substituent of MurNAc 6-phosphate, producing GlcNAc 6-phosphate and D-lactate. The chain is N-acetylmuramic acid 6-phosphate etherase from Clostridium botulinum (strain Hall / ATCC 3502 / NCTC 13319 / Type A).